A 205-amino-acid chain; its full sequence is GTP cyclohydrolase 1 (205 aa).

3 residues coordinate Zn(2+): Cys-94, His-97, and Cys-165.

The protein belongs to the GTP cyclohydrolase I family. In terms of assembly, homomer.

It carries out the reaction GTP + H2O = 7,8-dihydroneopterin 3'-triphosphate + formate + H(+). Its pathway is cofactor biosynthesis; 7,8-dihydroneopterin triphosphate biosynthesis; 7,8-dihydroneopterin triphosphate from GTP: step 1/1. This is GTP cyclohydrolase 1 from Sinorhizobium fredii (strain NBRC 101917 / NGR234).